The sequence spans 360 residues: Alanine racemase (360 aa).

The Proton acceptor; specific for D-alanine role is filled by lysine 36. N6-(pyridoxal phosphate)lysine is present on lysine 36. Arginine 132 is a substrate binding site. Tyrosine 256 acts as the Proton acceptor; specific for L-alanine in catalysis. Methionine 304 lines the substrate pocket.

Belongs to the alanine racemase family. Pyridoxal 5'-phosphate is required as a cofactor.

It carries out the reaction L-alanine = D-alanine. It participates in amino-acid biosynthesis; D-alanine biosynthesis; D-alanine from L-alanine: step 1/1. Functionally, catalyzes the interconversion of L-alanine and D-alanine. May also act on other amino acids. The sequence is that of Alanine racemase (alr) from Pasteurella multocida (strain Pm70).